A 372-amino-acid chain; its full sequence is Actin-related protein T3 (372 aa).

The protein belongs to the actin family. Interacts with PFN3. Ubiquitously expressed.

Its subcellular location is the cytoplasm. It is found in the cytoskeleton. The protein resides in the nucleus. The sequence is that of Actin-related protein T3 (ACTRT3) from Homo sapiens (Human).